Consider the following 123-residue polypeptide: Large ribosomal subunit protein bL12 (123 aa).

It belongs to the bacterial ribosomal protein bL12 family. Homodimer. Part of the ribosomal stalk of the 50S ribosomal subunit. Forms a multimeric L10(L12)X complex, where L10 forms an elongated spine to which 2 to 4 L12 dimers bind in a sequential fashion. Binds GTP-bound translation factors.

Forms part of the ribosomal stalk which helps the ribosome interact with GTP-bound translation factors. Is thus essential for accurate translation. In Marinomonas sp. (strain MWYL1), this protein is Large ribosomal subunit protein bL12.